The chain runs to 934 residues: Pesticidal crystal protein Cry1Aa (934 aa).

This sequence belongs to the delta endotoxin family.

Its function is as follows. Promotes colloidosmotic lysis by binding to the midgut epithelial cells of many lepidopteran larvae. The chain is Pesticidal crystal protein Cry1Aa (cry1Aa) from Bacillus thuringiensis subsp. sotto.